Consider the following 444-residue polypeptide: 1,4-beta-D-glucan glucohydrolase (444 aa).

The Proton donor role is filled by Glu-164. Glu-349 acts as the Nucleophile in catalysis.

This sequence belongs to the glycosyl hydrolase 1 family. Monomer.

It catalyses the reaction Hydrolysis of (1-&gt;4)-linkages in (1-&gt;4)-beta-D-glucans, to remove successive glucose units.. It carries out the reaction Hydrolysis of terminal, non-reducing beta-D-glucosyl residues with release of beta-D-glucose.. It participates in glycan metabolism; cellulose degradation. The protein operates within glycan metabolism; beta-D-glucan degradation. With respect to regulation, activated by glucose up to 200 mM when p-nitrophenyl-beta-glucoside is used as the substrate. This activation by end product concentrations may be due to a transglycosylation activity of the enzyme. In terms of biological role, broad substrate specificity glycosidase. Releases glucose from soluble glucooligomers, with a preference for longer oligomers; acts more readily on cellotetraose than on cellobiose. Displays similar activities towards the disaccharides lactose and cellobiose. Is also able to hydrolyze various aryl-beta-glycosides in vitro. This chain is 1,4-beta-D-glucan glucohydrolase, found in Thermotoga neapolitana (strain ATCC 49049 / DSM 4359 / NBRC 107923 / NS-E).